The chain runs to 344 residues: Dihydroorotate dehydrogenase (quinone) (344 aa).

FMN contacts are provided by residues 62 to 66 (AGLDK) and T86. Position 66 (K66) interacts with substrate. 111-115 (NRMGF) provides a ligand contact to substrate. Positions 139 and 172 each coordinate FMN. N172 contacts substrate. Catalysis depends on S175, which acts as the Nucleophile. Residue N177 participates in substrate binding. K217 and T245 together coordinate FMN. 246–247 (NT) is a substrate binding site. FMN-binding positions include G268, G297, and 318–319 (YS).

It belongs to the dihydroorotate dehydrogenase family. Type 2 subfamily. In terms of assembly, monomer. FMN is required as a cofactor.

Its subcellular location is the cell membrane. It carries out the reaction (S)-dihydroorotate + a quinone = orotate + a quinol. The protein operates within pyrimidine metabolism; UMP biosynthesis via de novo pathway; orotate from (S)-dihydroorotate (quinone route): step 1/1. In terms of biological role, catalyzes the conversion of dihydroorotate to orotate with quinone as electron acceptor. The sequence is that of Dihydroorotate dehydrogenase (quinone) from Chromobacterium violaceum (strain ATCC 12472 / DSM 30191 / JCM 1249 / CCUG 213 / NBRC 12614 / NCIMB 9131 / NCTC 9757 / MK).